The chain runs to 320 residues: Cytochrome f (320 aa).

An N-terminal signal peptide occupies residues 1–35 (MQTINTFSWINQRITRSISVLLLVYIITRTSISSA). Residues tyrosine 36, cysteine 56, cysteine 59, and histidine 60 each contribute to the heme site. The helical transmembrane segment at 286 to 306 (VQGLLFFLASVILAQIFLVLK) threads the bilayer.

It belongs to the cytochrome f family. The 4 large subunits of the cytochrome b6-f complex are cytochrome b6, subunit IV (17 kDa polypeptide, petD), cytochrome f and the Rieske protein, while the 4 small subunits are PetG, PetL, PetM and PetN. The complex functions as a dimer. Heme is required as a cofactor.

It localises to the plastid thylakoid membrane. Functionally, component of the cytochrome b6-f complex, which mediates electron transfer between photosystem II (PSII) and photosystem I (PSI), cyclic electron flow around PSI, and state transitions. This Cuscuta exaltata (Tall dodder) protein is Cytochrome f.